The sequence spans 517 residues: Probable anion transporter 6, chloroplastic (517 aa).

The interval threonine 51–leucine 73 is disordered. Residues glutamate 52–lysine 70 show a composition bias toward basic and acidic residues. The next 10 helical transmembrane spans lie at phenylalanine 130–leucine 150, isoleucine 170–proline 190, phenylalanine 229–isoleucine 249, glutamate 255–leucine 275, serine 312–glycine 332, leucine 352–leucine 372, isoleucine 397–proline 417, isoleucine 420–cysteine 440, isoleucine 452–threonine 472, and methionine 484–phenylalanine 504.

It belongs to the major facilitator superfamily. Sodium/anion cotransporter (TC 2.A.1.14) family. Expressed in leaf veins and sepals.

It localises to the plastid. The protein resides in the chloroplast membrane. In terms of biological role, inorganic phosphate and probable anion transporter. The protein is Probable anion transporter 6, chloroplastic (ANTR6) of Arabidopsis thaliana (Mouse-ear cress).